The primary structure comprises 736 residues: Na(+)/H(+) antiporter NhaA (736 aa).

Residues 1-387 (MNHSPQSARP…ICGYLLLRAA (387 aa)) form a na(+)/H(+) antiporter NhaA region. The next 11 membrane-spanning stretches (helical) occupy residues 23–43 (AGGI…NSPF), 58–78 (LSLA…LVGL), 96–116 (MLPG…FAVL), 126–146 (GWAV…SLLG), 155–175 (VFLA…IAIF), 178–198 (AEIS…LFVM), 201–221 (MDVV…FFVF), 265–285 (VAFI…FKGL), 298–318 (ILLG…WLAI), 334–354 (LYGV…IGLL), and 367–387 (IGVL…LRAA). The segment at 388–736 (RPDQSAANPL…EKAIWARYGL (349 aa)) is peptidase S49.

In the N-terminal section; belongs to the NhaA Na(+)/H(+) (TC 2.A.33) antiporter family. The protein in the C-terminal section; belongs to the peptidase S49 family.

Its subcellular location is the cell inner membrane. It carries out the reaction Na(+)(in) + 2 H(+)(out) = Na(+)(out) + 2 H(+)(in). In terms of biological role, na(+)/H(+) antiporter that extrudes sodium in exchange for external protons. This is Na(+)/H(+) antiporter NhaA from Brucella melitensis biotype 1 (strain ATCC 23456 / CCUG 17765 / NCTC 10094 / 16M).